Here is a 308-residue protein sequence, read N- to C-terminus: tRNA dimethylallyltransferase 2 (308 aa).

13–20 (GPTASGKT) lines the ATP pocket. Residue 15-20 (TASGKT) participates in substrate binding. The tract at residues 38 to 41 (DSRQ) is interaction with substrate tRNA.

This sequence belongs to the IPP transferase family. As to quaternary structure, monomer. Requires Mg(2+) as cofactor.

It catalyses the reaction adenosine(37) in tRNA + dimethylallyl diphosphate = N(6)-dimethylallyladenosine(37) in tRNA + diphosphate. Catalyzes the transfer of a dimethylallyl group onto the adenine at position 37 in tRNAs that read codons beginning with uridine, leading to the formation of N6-(dimethylallyl)adenosine (i(6)A). The chain is tRNA dimethylallyltransferase 2 from Bacteroides fragilis (strain YCH46).